Consider the following 303-residue polypeptide: Inner kinetochore subunit mal2 (303 aa).

Belongs to the CENP-O/MCM21 family. As to quaternary structure, component of the heterotetrameric kinetochore subcomplex COMA, which consists of fta2, fta7, mal2 and mis17. The COMA subcomplex is part of a larger constitutive centromere-associated network (CCAN) (also known as central kinetochore Sim4 complex in fission yeast), which is composed of at least cnl2, cnp3, cnp20, fta1, fta2, fta3, fta4, fta6, fta7, mal2, mhf1, mhf2, mis6, mis15, mis17, sim4 and wip1.

It localises to the nucleus. It is found in the chromosome. Its subcellular location is the centromere. The protein localises to the kinetochore. Its function is as follows. Component of the kinetochore, a multiprotein complex that assembles on centromeric DNA and attaches chromosomes to spindle microtubules, mediating chromosome segregation and sister chromatid segregation during meiosis and mitosis. Component of the inner kinetochore COMA complex, which connects centromere-associated proteins and the outer kinetochore. COMA interacts with other inner kinetochore proteins to form the inner kinetochore constitutive centromere-associated network (CCAN), which serves as a structural platform for outer kinetochore assembly. This is Inner kinetochore subunit mal2 (mal2) from Schizosaccharomyces pombe (strain 972 / ATCC 24843) (Fission yeast).